A 405-amino-acid chain; its full sequence is Na(+)/H(+) antiporter NhaA 1 (405 aa).

Helical transmembrane passes span Phe-20–Val-40, Leu-68–Val-88, Leu-105–Val-125, Gly-134–Gly-154, Leu-163–Phe-183, Ala-186–Met-206, Ile-214–His-234, Gly-263–Val-283, Ile-301–Val-321, Trp-334–Ile-354, and Ile-371–Thr-391.

It belongs to the NhaA Na(+)/H(+) (TC 2.A.33) antiporter family.

The protein resides in the cell inner membrane. The enzyme catalyses Na(+)(in) + 2 H(+)(out) = Na(+)(out) + 2 H(+)(in). Na(+)/H(+) antiporter that extrudes sodium in exchange for external protons. The sequence is that of Na(+)/H(+) antiporter NhaA 1 from Erythrobacter litoralis (strain HTCC2594).